The primary structure comprises 344 residues: Arginase 2, chloroplastic/mitochondrial (344 aa).

Residues 1–26 (MWKIGQRGVPYFQRLIAAPFTTLRSL) constitute a chloroplast and mitochondrion transit peptide. The Mn(2+) site is built by His163, Asp187, His189, and Asp191. Residues 189-193 (HPDIY), 197-199 (EGN), and Asn228 each bind substrate. Mn(2+)-binding residues include Asp272 and Asp274. Position 315 (Glu315) interacts with substrate.

This sequence belongs to the arginase family. Mn(2+) serves as cofactor. As to expression, expressed in vasculature of roots, root tips, leaves and cotyledons.

Its subcellular location is the mitochondrion. The protein localises to the plastid. It localises to the chloroplast. It carries out the reaction L-arginine + H2O = urea + L-ornithine. The enzyme catalyses agmatine + H2O = urea + putrescine. It participates in nitrogen metabolism; urea cycle; L-ornithine and urea from L-arginine: step 1/1. Its pathway is amine and polyamine biosynthesis; putrescine biosynthesis via agmatine pathway; putrescine from agmatine: step 1/1. Functionally, catalyzes the hydrolysis of L-arginine to urea and L-ornithine. The latter can be utilized in the urea cycle or as a precursor for the synthesis of both polyamines and proline. Possesses agmatinase activity. Catalyzes the formation of putrescine from agmatine. This is Arginase 2, chloroplastic/mitochondrial (ARGAH2) from Arabidopsis thaliana (Mouse-ear cress).